The chain runs to 311 residues: E3 ubiquitin-protein ligase RNF126 (311 aa).

Alanine 2 carries the N-acetylalanine modification. A Phosphoserine modification is found at serine 5. The required for interaction with BAG6 stretch occupies residues serine 5–alanine 100. Residues cysteine 13, cysteine 16, cysteine 29, and cysteine 32 each coordinate Zn(2+). A C4-type zinc finger spans residues cysteine 13–cysteine 32. Disordered stretches follow at residues glutamate 42 to proline 64 and proline 94 to threonine 132. Residues threonine 47–serine 61 are compositionally biased toward polar residues. Positions aspartate 103 to histidine 116 are enriched in basic and acidic residues. Residues proline 117–threonine 132 are compositionally biased toward basic residues. Positions threonine 200–asparagine 304 are sufficient for interaction with AICDA. Residues cysteine 229–arginine 270 form an RING-type zinc finger. The interval asparagine 277–serine 311 is disordered. Residues serine 289–serine 311 show a composition bias toward low complexity.

Interacts with CCDC50, EGFR, FLT3 and SCAMP3. Interacts with BAG6 (via ubiquitin-like domain); required for BAG6-dependent ubiquitination of proteins mislocalized to the cytosol. Interacts with CDKN1A. Interacts with AICDA. Post-translationally, ubiquitinated. May undergo autoubiquitination. As to expression, highly expressed in liver and testis.

It localises to the cytoplasm. It is found in the nucleus. The catalysed reaction is S-ubiquitinyl-[E2 ubiquitin-conjugating enzyme]-L-cysteine + [acceptor protein]-L-lysine = [E2 ubiquitin-conjugating enzyme]-L-cysteine + N(6)-ubiquitinyl-[acceptor protein]-L-lysine.. It functions in the pathway protein modification; protein ubiquitination. Functionally, E3 ubiquitin-protein ligase that mediates ubiquitination oF target proteins. Depending on the associated E2 ligase, mediates 'Lys-27'-, 'Lys-29'-, 'Lys-48'- and/or 'Lys-63'-linked polyubiquitination of substrates. Part of a BAG6-dependent quality control process ensuring that proteins of the secretory pathway that are mislocalized to the cytosol are degraded by the proteasome. Probably acts by providing the ubiquitin ligase activity associated with the BAG6 complex and be responsible for ubiquitination of the hydrophobic mislocalized proteins and their targeting to the proteasome. May also play a role in the endosomal recycling of IGF2R, the cation-independent mannose-6-phosphate receptor. May play a role in the endosomal sorting and degradation of several membrane receptors including EGFR, FLT3, MET and CXCR4, by mediating their ubiquitination. By ubiquitinating CDKN1A/p21 and targeting it for degradation, may also promote cell proliferation. May monoubiquitinate AICDA. Acts as a regulator of DNA repair by mediating 'Lys-27'- and 'Lys-29'-linked polyubiquitination of MRE11, thereby promoting the exonuclease activity of MRE11. In Homo sapiens (Human), this protein is E3 ubiquitin-protein ligase RNF126.